We begin with the raw amino-acid sequence, 338 residues long: Diacylglycerol acyltransferase/mycolyltransferase Ag85A (338 aa).

A signal peptide spans 1 to 42 (MQLVDRVRGAVTGMSRRLVVGAVGAALVSGLVGAVGGTATAG). 85-86 (LR) serves as a coordination point for substrate. A fibronectin-binding region spans residues 101 to 111 (FEWYDQSGLSV). Cys-130 and Cys-135 are disulfide-bonded. 2 residues coordinate substrate: Ser-169 and Asp-197. Ser-169 serves as the catalytic Nucleophile. Residue Glu-273 is part of the active site. Residues 275-278 (FVRT), Lys-282, and 305-307 (HSW) contribute to the substrate site. Residue His-305 is part of the active site.

This sequence belongs to the mycobacterial A85 antigen family. In terms of assembly, homodimer.

Its subcellular location is the secreted. The protein localises to the cell wall. The protein resides in the cytoplasm. It carries out the reaction an acyl-CoA + a 1,2-diacyl-sn-glycerol = a triacyl-sn-glycerol + CoA. It catalyses the reaction 2 alpha,alpha'-trehalose 6-mycolate = alpha,alpha'-trehalose 6,6'-bismycolate + alpha,alpha-trehalose. Functionally, the antigen 85 proteins (FbpA, FbpB, FbpC) are responsible for the high affinity of mycobacteria for fibronectin, a large adhesive glycoprotein, which facilitates the attachment of M.tuberculosis to murine alveolar macrophages (AMs). They also help to maintain the integrity of the cell wall by catalyzing the transfer of mycolic acids to cell wall arabinogalactan, and through the synthesis of alpha,alpha-trehalose dimycolate (TDM, cord factor). They catalyze the transfer of a mycoloyl residue from one molecule of alpha,alpha-trehalose monomycolate (TMM) to another TMM, leading to the formation of TDM. FbpA mediates triacylglycerol (TAG) formation with long-chain acyl-CoA as the acyl donor and 1,2-dipalmitoyl-sn-glycerol (1,2-dipalmitin) as the acyl acceptor. It has a preference for C26:0-CoA over C18:1-CoA. In Mycobacterium bovis (strain ATCC BAA-935 / AF2122/97), this protein is Diacylglycerol acyltransferase/mycolyltransferase Ag85A (fbpA).